The chain runs to 325 residues: Beta-ketoacyl-[acyl-carrier-protein] synthase III (325 aa).

Residues Cys116 and His252 contribute to the active site. Positions 253 to 257 (QANLR) are ACP-binding. The active site involves Asn282.

Belongs to the thiolase-like superfamily. FabH family. Homodimer.

The protein resides in the cytoplasm. It carries out the reaction malonyl-[ACP] + acetyl-CoA + H(+) = 3-oxobutanoyl-[ACP] + CO2 + CoA. It participates in lipid metabolism; fatty acid biosynthesis. Catalyzes the condensation reaction of fatty acid synthesis by the addition to an acyl acceptor of two carbons from malonyl-ACP. Catalyzes the first condensation reaction which initiates fatty acid synthesis and may therefore play a role in governing the total rate of fatty acid production. Possesses both acetoacetyl-ACP synthase and acetyl transacylase activities. Its substrate specificity determines the biosynthesis of branched-chain and/or straight-chain of fatty acids. This Xanthomonas campestris pv. campestris (strain ATCC 33913 / DSM 3586 / NCPPB 528 / LMG 568 / P 25) protein is Beta-ketoacyl-[acyl-carrier-protein] synthase III.